A 429-amino-acid chain; its full sequence is UDP-N-acetylglucosamine 1-carboxyvinyltransferase (429 aa).

22–23 (KN) contributes to the phosphoenolpyruvate binding site. Arginine 102 is a UDP-N-acetyl-alpha-D-glucosamine binding site. The active-site Proton donor is cysteine 126. Cysteine 126 is modified (2-(S-cysteinyl)pyruvic acid O-phosphothioketal). UDP-N-acetyl-alpha-D-glucosamine contacts are provided by residues 131–135 (RPVDL), aspartate 316, and isoleucine 338.

Belongs to the EPSP synthase family. MurA subfamily.

It is found in the cytoplasm. The catalysed reaction is phosphoenolpyruvate + UDP-N-acetyl-alpha-D-glucosamine = UDP-N-acetyl-3-O-(1-carboxyvinyl)-alpha-D-glucosamine + phosphate. It functions in the pathway cell wall biogenesis; peptidoglycan biosynthesis. Cell wall formation. Adds enolpyruvyl to UDP-N-acetylglucosamine. The polypeptide is UDP-N-acetylglucosamine 1-carboxyvinyltransferase (Methylobacterium sp. (strain 4-46)).